Here is a 117-residue protein sequence, read N- to C-terminus: DNA-directed RNA polymerase subunit omega (117 aa).

This sequence belongs to the RNA polymerase subunit omega family. In terms of assembly, the RNAP catalytic core consists of 2 alpha, 1 beta, 1 beta' and 1 omega subunit. When a sigma factor is associated with the core the holoenzyme is formed, which can initiate transcription.

The enzyme catalyses RNA(n) + a ribonucleoside 5'-triphosphate = RNA(n+1) + diphosphate. Functionally, promotes RNA polymerase assembly. Latches the N- and C-terminal regions of the beta' subunit thereby facilitating its interaction with the beta and alpha subunits. The polypeptide is DNA-directed RNA polymerase subunit omega (Cereibacter sphaeroides (strain ATCC 17025 / ATH 2.4.3) (Rhodobacter sphaeroides)).